A 514-amino-acid polypeptide reads, in one-letter code: Histidine ammonia-lyase (514 aa).

The segment at residues 143–145 is a cross-link (5-imidazolinone (Cys-Gly)); sequence CSG. S144 is subject to 2,3-didehydroalanine (Ser).

Belongs to the PAL/histidase family. Contains an active site 4-methylidene-imidazol-5-one (MIO), which is formed autocatalytically by cyclization and dehydration of residues Cys-Ser-Gly.

It is found in the cytoplasm. The enzyme catalyses L-histidine = trans-urocanate + NH4(+). The protein operates within amino-acid degradation; L-histidine degradation into L-glutamate; N-formimidoyl-L-glutamate from L-histidine: step 1/3. The polypeptide is Histidine ammonia-lyase (hutH) (Streptomyces griseus).